The primary structure comprises 705 residues: Translation initiation factor IF-2 (705 aa).

The interval 40–124 is disordered; sequence DDQIKALDKK…QPAAPKEIPS (85 aa). The span at 41–58 shows a compositional bias: basic and acidic residues; the sequence is DQIKALDKKFKKEQKNDN. Positions 59–77 are enriched in low complexity; it reads KQSTQNNHQKSNNQNQNKG. Over residues 94–108 the composition is skewed to basic residues; it reads KGNKKNNRNNKKNNK. Positions 207-376 constitute a tr-type G domain; that stretch reads ERPAVVTIMG…GLVAEVQELK (170 aa). The interval 216-223 is G1; sequence GHVDHGKT. A GTP-binding site is contributed by 216–223; it reads GHVDHGKT. Residues 241-245 form a G2 region; that stretch reads GITQH. Positions 262–265 are G3; the sequence is DTPG. GTP is bound by residues 262–266 and 316–319; these read DTPGH and NKID. A G4 region spans residues 316–319; the sequence is NKID. The segment at 352 to 354 is G5; sequence SAL.

Belongs to the TRAFAC class translation factor GTPase superfamily. Classic translation factor GTPase family. IF-2 subfamily.

The protein localises to the cytoplasm. Functionally, one of the essential components for the initiation of protein synthesis. Protects formylmethionyl-tRNA from spontaneous hydrolysis and promotes its binding to the 30S ribosomal subunits. Also involved in the hydrolysis of GTP during the formation of the 70S ribosomal complex. The chain is Translation initiation factor IF-2 from Staphylococcus aureus (strain USA300).